Here is a 211-residue protein sequence, read N- to C-terminus: Orotate phosphoribosyltransferase (211 aa).

5-phospho-alpha-D-ribose 1-diphosphate contacts are provided by residues arginine 103, lysine 107, histidine 109, and 129–137 (EDLISTGKS). Orotate is bound at residue serine 133.

Belongs to the purine/pyrimidine phosphoribosyltransferase family. PyrE subfamily. In terms of assembly, homodimer. Requires Mg(2+) as cofactor.

The enzyme catalyses orotidine 5'-phosphate + diphosphate = orotate + 5-phospho-alpha-D-ribose 1-diphosphate. It functions in the pathway pyrimidine metabolism; UMP biosynthesis via de novo pathway; UMP from orotate: step 1/2. Its function is as follows. Catalyzes the transfer of a ribosyl phosphate group from 5-phosphoribose 1-diphosphate to orotate, leading to the formation of orotidine monophosphate (OMP). The chain is Orotate phosphoribosyltransferase from Fusobacterium nucleatum subsp. nucleatum (strain ATCC 25586 / DSM 15643 / BCRC 10681 / CIP 101130 / JCM 8532 / KCTC 2640 / LMG 13131 / VPI 4355).